A 153-amino-acid polypeptide reads, in one-letter code: UPF0178 protein Sfum_1097 (153 aa).

The protein belongs to the UPF0178 family.

This Syntrophobacter fumaroxidans (strain DSM 10017 / MPOB) protein is UPF0178 protein Sfum_1097.